The primary structure comprises 201 residues: MAAGSGEQELRAIIRDLGCGPYFLGTFDKRFPGFMAPHKVACAIVNTAGRETGGEHWLAFAWNPRSNTCYLFDPFGFSDQRLKQIYQFEYEGLLRRSALATKDRCVTWKSHQTCRVRVGRCGFSAACSTACAWPTPMDKNPTMNLLTGVPNGMLQSPQVEPTLRRNQEALYRFLNSHSAYFRSHRARIEKATAFDRMNQDM.

Catalysis depends on residues His-56, Asp-73, and Cys-121.

It belongs to the peptidase C5 family. As to quaternary structure, interacts with protease cofactor pVI-C; this interaction is necessary for protease activation.

The protein resides in the virion. Its subcellular location is the host nucleus. It carries out the reaction Cleaves proteins of the adenovirus and its host cell at two consensus sites: -Yaa-Xaa-Gly-Gly-|-Xaa- and -Yaa-Xaa-Gly-Xaa-|-Gly- (in which Yaa is Met, Ile or Leu, and Xaa is any amino acid).. With respect to regulation, requires DNA and protease cofactor for maximal activation. Inside nascent virions, becomes partially activated by binding to the viral DNA, allowing it to cleave the cofactor that binds to the protease and fully activates it. Actin, like the viral protease cofactor, seems to act as a cofactor in the cleavage of cytokeratin 18 and of actin itself. Its function is as follows. Cleaves viral precursor proteins (pTP, pIIIa, pVI, pVII, pVIII, and pX) inside newly assembled particles giving rise to mature virions. Protease complexed to its cofactor slides along the viral DNA to specifically locate and cleave the viral precursors. Mature virions have a weakened organization compared to the unmature virions, thereby facilitating subsequent uncoating. Without maturation, the particle lacks infectivity and is unable to uncoat. Late in adenovirus infection, in the cytoplasm, may participate in the cytoskeleton destruction. Cleaves host cell cytoskeletal keratins K7 and K18. The sequence is that of Protease from Homo sapiens (Human).